Consider the following 432-residue polypeptide: Trigger factor (432 aa).

In terms of domain architecture, PPIase FKBP-type spans 161–246; the sequence is DDRVTIDFVG…LKKVENMVLP (86 aa).

It belongs to the FKBP-type PPIase family. Tig subfamily.

Its subcellular location is the cytoplasm. The enzyme catalyses [protein]-peptidylproline (omega=180) = [protein]-peptidylproline (omega=0). Its function is as follows. Involved in protein export. Acts as a chaperone by maintaining the newly synthesized protein in an open conformation. Functions as a peptidyl-prolyl cis-trans isomerase. This chain is Trigger factor, found in Haemophilus influenzae (strain PittGG).